The chain runs to 152 residues: Deoxyuridine 5'-triphosphate nucleotidohydrolase (152 aa).

Substrate-binding positions include 72–74 (RSG), Asn85, and 89–91 (TVD).

This sequence belongs to the dUTPase family. It depends on Mg(2+) as a cofactor.

The enzyme catalyses dUTP + H2O = dUMP + diphosphate + H(+). It functions in the pathway pyrimidine metabolism; dUMP biosynthesis; dUMP from dCTP (dUTP route): step 2/2. Functionally, this enzyme is involved in nucleotide metabolism: it produces dUMP, the immediate precursor of thymidine nucleotides and it decreases the intracellular concentration of dUTP so that uracil cannot be incorporated into DNA. The chain is Deoxyuridine 5'-triphosphate nucleotidohydrolase from Nitrobacter hamburgensis (strain DSM 10229 / NCIMB 13809 / X14).